Consider the following 276-residue polypeptide: Transmembrane protein 81 (276 aa).

The N-terminal stretch at 1–24 (MKTSATSFIPGSLVLAFCLPVVAT) is a signal peptide. Over 25–225 (SPKTLAIPEK…QHPPWKKKVA (201 aa)) the chain is Extracellular. The N-linked (GlcNAc...) asparagine glycan is linked to Asn45. Residues 83–176 (TNWLCGMLHF…NLRLVKRLYF (94 aa)) form the Ig-like domain. Cys104 and Cys160 are oxidised to a cystine. Asn211 carries an N-linked (GlcNAc...) asparagine glycan. A helical membrane pass occupies residues 226–246 (IAVGIGVAGGVTGGVLVSIVL). Topologically, residues 247–276 (CGRLSVIHSSASLETLQALLPKGGMLRKPD) are cytoplasmic.

As to quaternary structure, forms a complex with IZUMO1 and SPACA6 on spermatocyte cell membrane required for fertilization.

Its subcellular location is the cell membrane. In terms of biological role, essential fertilization factor required for male fertility. Part of a conserved trimeric sperm complex with the essential fertilization factors IZUMO1 and SPACA6 which bridges sperm and oocyte membranes during fertilization by binding to IZUMO1R/JUNO on the oocyte. This is Transmembrane protein 81 (TMEM81) from Bos taurus (Bovine).